Here is a 333-residue protein sequence, read N- to C-terminus: DNA-directed RNA polymerase subunit alpha (333 aa).

The alpha N-terminal domain (alpha-NTD) stretch occupies residues 1-234 (MQSSVNEFLT…QQLAAFVDLK (234 aa)). Positions 248–333 (IDPILLRPVD…SLKKDDKATA (86 aa)) are alpha C-terminal domain (alpha-CTD).

It belongs to the RNA polymerase alpha chain family. As to quaternary structure, homodimer. The RNAP catalytic core consists of 2 alpha, 1 beta, 1 beta' and 1 omega subunit. When a sigma factor is associated with the core the holoenzyme is formed, which can initiate transcription.

The enzyme catalyses RNA(n) + a ribonucleoside 5'-triphosphate = RNA(n+1) + diphosphate. Its function is as follows. DNA-dependent RNA polymerase catalyzes the transcription of DNA into RNA using the four ribonucleoside triphosphates as substrates. The chain is DNA-directed RNA polymerase subunit alpha from Pseudomonas aeruginosa (strain UCBPP-PA14).